The sequence spans 78 residues: MSDIAERVKKIVAEQMGVDLDKVTDDAKFVEDLGADSLDNVELVMAFEEEFGCEIPDETAEKITSVSDAIKYIGENME.

Residues 2-77 (SDIAERVKKI…DAIKYIGENM (76 aa)) form the Carrier domain. Ser37 is modified (O-(pantetheine 4'-phosphoryl)serine).

The protein belongs to the acyl carrier protein (ACP) family. In terms of processing, 4'-phosphopantetheine is transferred from CoA to a specific serine of apo-ACP by AcpS. This modification is essential for activity because fatty acids are bound in thioester linkage to the sulfhydryl of the prosthetic group.

Its subcellular location is the cytoplasm. It functions in the pathway lipid metabolism; fatty acid biosynthesis. Its function is as follows. Carrier of the growing fatty acid chain in fatty acid biosynthesis. The chain is Acyl carrier protein from Magnetococcus marinus (strain ATCC BAA-1437 / JCM 17883 / MC-1).